Here is a 233-residue protein sequence, read N- to C-terminus: Probable GTP-binding protein EngB (233 aa).

The region spanning 31–205 (TGVEIAFAGR…RRKLDTWFGP (175 aa)) is the EngB-type G domain. Residues 39 to 46 (GRSNAGKS), 66 to 70 (GRTQL), 84 to 87 (DLPG), 151 to 154 (TKAD), and 184 to 186 (FSS) each bind GTP. Positions 46 and 68 each coordinate Mg(2+).

Belongs to the TRAFAC class TrmE-Era-EngA-EngB-Septin-like GTPase superfamily. EngB GTPase family. Requires Mg(2+) as cofactor.

In terms of biological role, necessary for normal cell division and for the maintenance of normal septation. The protein is Probable GTP-binding protein EngB of Photobacterium profundum (strain SS9).